A 224-amino-acid polypeptide reads, in one-letter code: Cytidylate kinase (224 aa).

ATP is bound at residue 11–19 (GPAAAGKST).

This sequence belongs to the cytidylate kinase family. Type 1 subfamily.

Its subcellular location is the cytoplasm. It carries out the reaction CMP + ATP = CDP + ADP. The catalysed reaction is dCMP + ATP = dCDP + ADP. In Listeria innocua serovar 6a (strain ATCC BAA-680 / CLIP 11262), this protein is Cytidylate kinase.